A 266-amino-acid polypeptide reads, in one-letter code: Putative transmembrane ascorbate-dependent reductase CYB561 homolog (266 aa).

Residues 1 to 22 (MSLLFDPGFVILREDQSVKLFN) lie on the Cytoplasmic side of the membrane. A helical membrane pass occupies residues 23-43 (IILVMSQVFGGLAVLLVTIWM). One can recognise a Cytochrome b561 domain in the interval 27–240 (MSQVFGGLAV…YTVCVLLLVL (214 aa)). Topologically, residues 44–61 (SKFESGFAWNEDPDKEFN) are vesicular. The chain crosses the membrane as a helical span at residues 62–82 (YHPTFMIMGMVFLFGEALLVY). Heme b is bound by residues His-63, Arg-83, and Lys-90. Residues 83-95 (RVFRNERKKFSKT) lie on the Cytoplasmic side of the membrane. The L-ascorbate site is built by Lys-90 and Lys-94. Residues 96–116 (LHVILHSCVLVFMLMALKAVF) form a helical membrane-spanning segment. Heme b-binding positions include His-97, 134 to 137 (NLVS), and His-139. The Vesicular portion of the chain corresponds to 117–141 (DYHNLHKDPSGNPAPIVNLVSLHSW). A helical transmembrane segment spans residues 142–162 (IGLSVVILYFAQYIVGFITYF). Topologically, residues 163–176 (FPGMPIPIRQLVMP) are cytoplasmic. Arg-171 lines the L-ascorbate pocket. Residues 177-197 (FHQMFGVLIFIFVSITVAMGI) form a helical membrane-spanning segment. His-178 and Glu-199 together coordinate heme b. At 198–219 (SERAAWKHTCWTKEGQMCAQQA) the chain is on the vesicular side. Residues 220–240 (TSSFVGVFTFLYTVCVLLLVL) traverse the membrane as a helical segment. Topologically, residues 241-266 (NPRWKRQSLPEEEGLHHLTSSHSMSD) are cytoplasmic. Position 245 (Lys-245) interacts with heme b.

The cofactor is heme b.

The protein localises to the membrane. It catalyses the reaction monodehydro-L-ascorbate radical(out) + L-ascorbate(in) = monodehydro-L-ascorbate radical(in) + L-ascorbate(out). Putative transmembrane reductase that uses ascorbate as an electron donor in the cytoplasm and transfers electrons across membranes to reduce monodehydro-L-ascorbate radical in the lumen of secretory vesicles. The chain is Putative transmembrane ascorbate-dependent reductase CYB561 homolog from Caenorhabditis elegans.